The chain runs to 344 residues: MSTSLSYRDAGVGIDAGDQLVEKIKPFAKRTMRPEVLGDLGGFGALVEIGKKYQNPVLVSGTDGVGTKLKLAFDWDKHDTVGIDLVAMSVNDILVQGAEPLFFLDYFACGKLDVPRATDVIKGIAQGCEESGCALIGGETAEMPGMYPVGEYDLAGFAVGVVEKENVITGLSIGAGDVVLGLASNGAHSNGYSLIRKIIERDNPDLDAEFDNGKTLREAVIAPTRLYVKPILAALEKFTIKGMAHITGGGITENVPRVLPKNTVAQIDAESWELPKLFQWLQKAGNVETQEMYRTFNCGIGMVVIVAAEDADAVRSFLSGQGETVYRLGCIRERQGNEHQTQVA.

The protein belongs to the AIR synthase family.

Its subcellular location is the cytoplasm. The enzyme catalyses 2-formamido-N(1)-(5-O-phospho-beta-D-ribosyl)acetamidine + ATP = 5-amino-1-(5-phospho-beta-D-ribosyl)imidazole + ADP + phosphate + H(+). It participates in purine metabolism; IMP biosynthesis via de novo pathway; 5-amino-1-(5-phospho-D-ribosyl)imidazole from N(2)-formyl-N(1)-(5-phospho-D-ribosyl)glycinamide: step 2/2. The sequence is that of Phosphoribosylformylglycinamidine cyclo-ligase from Neisseria gonorrhoeae (strain ATCC 700825 / FA 1090).